Consider the following 263-residue polypeptide: 3-methyl-2-oxobutanoate hydroxymethyltransferase 2 (263 aa).

The Mg(2+) site is built by Asp-45 and Asp-84. Residues 45-46 (DS), Asp-84, and Lys-112 each bind 3-methyl-2-oxobutanoate. Position 114 (Glu-114) interacts with Mg(2+). Catalysis depends on Glu-181, which acts as the Proton acceptor.

It belongs to the PanB family. Homodecamer; pentamer of dimers. Mg(2+) is required as a cofactor.

It is found in the cytoplasm. The enzyme catalyses 3-methyl-2-oxobutanoate + (6R)-5,10-methylene-5,6,7,8-tetrahydrofolate + H2O = 2-dehydropantoate + (6S)-5,6,7,8-tetrahydrofolate. The protein operates within cofactor biosynthesis; (R)-pantothenate biosynthesis; (R)-pantoate from 3-methyl-2-oxobutanoate: step 1/2. Its function is as follows. Catalyzes the reversible reaction in which hydroxymethyl group from 5,10-methylenetetrahydrofolate is transferred onto alpha-ketoisovalerate to form ketopantoate. The sequence is that of 3-methyl-2-oxobutanoate hydroxymethyltransferase 2 from Aliivibrio fischeri (strain ATCC 700601 / ES114) (Vibrio fischeri).